The following is an 830-amino-acid chain: Leucine--tRNA ligase (830 aa).

The 'HIGH' region motif lies at 42 to 52 (PYPSGNLHMGH). Residues 585-589 (KMSKS) carry the 'KMSKS' region motif. Residue lysine 588 coordinates ATP.

This sequence belongs to the class-I aminoacyl-tRNA synthetase family.

The protein resides in the cytoplasm. It carries out the reaction tRNA(Leu) + L-leucine + ATP = L-leucyl-tRNA(Leu) + AMP + diphosphate. The sequence is that of Leucine--tRNA ligase from Halothermothrix orenii (strain H 168 / OCM 544 / DSM 9562).